Consider the following 284-residue polypeptide: NADH-cytochrome b5 reductase 1 (284 aa).

Residues 7 to 27 (KLVVVIVIVVVPLLFKFIIGP) traverse the membrane as a helical segment. Residues 38-142 (NDFQSFPLVE…KGPRGNYHYE (105 aa)) enclose the FAD-binding FR-type domain. Residues 122 to 137 (GELK…GPRG) and 148 to 180 (HLGM…KVSL) contribute to the FAD site.

Belongs to the flavoprotein pyridine nucleotide cytochrome reductase family. As to quaternary structure, monomer. Component of the 2-(3-amino-3-carboxypropyl)histidine synthase complex composed of DPH1, DPH2, KTI11/DPH3 and a NADH-dependent reductase, predominantly CBR1. Interacts with KTI11/DPH3. Interacts with STE20. FAD is required as a cofactor.

It localises to the mitochondrion outer membrane. It carries out the reaction 2 Fe(III)-[cytochrome b5] + NADH = 2 Fe(II)-[cytochrome b5] + NAD(+) + H(+). It catalyses the reaction 2 Fe(3+)-[Dph3] + NADH = 2 Fe(2+)-[Dph3] + NAD(+) + H(+). It participates in protein modification; peptidyl-diphthamide biosynthesis. Competitively inhibited by NAD(+). Inhibited by mercurials such as p-chloromercuribenzoate (PCMB) and HgCl(2). Enzymatic activity increases under anaerobic conditions. NADH-dependent reductase for KTI11/DPH3 and cytochrome b5. Required for the first step of diphthamide biosynthesis, a post-translational modification of histidine which occurs in elongation factor 2. DPH1 and DPH2 transfer a 3-amino-3-carboxypropyl (ACP) group from S-adenosyl-L-methionine (SAM) to a histidine residue, the reaction is assisted by a reduction system comprising KTI11/DPH3 and a NADH-dependent reductase, predominantly CBR1. By reducing KTI11/DPH3, also involved in the formation of the tRNA wobble base modification mcm5s 2U (5-methoxycarbonylmethyl-2-thiouridine), mediated by the elongator complex. The cytochrome b5/NADH cytochrome b5 reductase electron transfer system supports the catalytic activity of several sterol biosynthetic enzymes. Plays a role in bud morphology. The polypeptide is NADH-cytochrome b5 reductase 1 (CBR1) (Saccharomyces cerevisiae (strain ATCC 204508 / S288c) (Baker's yeast)).